We begin with the raw amino-acid sequence, 433 residues long: MEKIKLNLLNAIDSSEILNYKDQVKEINEKMNRFEMIGSDFLGWKDLPNQINWDEFLNMEEKAKWLIKENVEILVVIGIGGSYLGARAAIEFVNGTFPLSGSKKLEIIYAGTNLSSTATAQLLAYVENKKFAINIISKSGTTLEPSIAFRFFRELLEKKVGKAESRKFIIATTDANKGLLREIVRKEGYTSFIIPDDVGGRYSVLTPVGLFPMLCAGLNVREILVGAQKSNDFYKKSDLEENIAYQYAVARHIMHTQKKYAVEVLISYEPYFQYFLEWWKQLFGETEGKNELGLYPSSKIFSTDLHSLGQFIQEGSRILFETVINLKKPKIDLDISEDKENFDGINYLVNKTLHGINVAALDATVSAHTDVAKVPNIILEIADSTEETLGWLFMFFERACAMSAYLLNLNPFNQPGVEVYKANMFKILGKPKK.

Glutamate 285 (proton donor) is an active-site residue. Residues histidine 306 and lysine 421 contribute to the active site.

This sequence belongs to the GPI family.

The protein localises to the cytoplasm. It carries out the reaction alpha-D-glucose 6-phosphate = beta-D-fructose 6-phosphate. It participates in carbohydrate biosynthesis; gluconeogenesis. It functions in the pathway carbohydrate degradation; glycolysis; D-glyceraldehyde 3-phosphate and glycerone phosphate from D-glucose: step 2/4. Functionally, catalyzes the reversible isomerization of glucose-6-phosphate to fructose-6-phosphate. This is Glucose-6-phosphate isomerase from Mycoplasma mobile (strain ATCC 43663 / 163K / NCTC 11711) (Mesomycoplasma mobile).